The sequence spans 167 residues: Probable host range protein 2 (167 aa).

This sequence belongs to the poxviridae C7 protein family.

Plays a role for multiplication of the virus in different cell types. The polypeptide is Probable host range protein 2 (Yaba monkey tumor virus (strain VR587) (YMTV)).